Consider the following 506-residue polypeptide: Cobyric acid synthase (506 aa).

Residues 251-448 (DITIAIVQLP…LHGLFDSDAF (198 aa)) form the GATase cobBQ-type domain. C332 functions as the Nucleophile in the catalytic mechanism. H440 is a catalytic residue.

The protein belongs to the CobB/CobQ family. CobQ subfamily.

It participates in cofactor biosynthesis; adenosylcobalamin biosynthesis. Its function is as follows. Catalyzes amidations at positions B, D, E, and G on adenosylcobyrinic A,C-diamide. NH(2) groups are provided by glutamine, and one molecule of ATP is hydrogenolyzed for each amidation. The polypeptide is Cobyric acid synthase (Salmonella dublin (strain CT_02021853)).